A 184-amino-acid polypeptide reads, in one-letter code: MAIDKEKIKQAVRLFLEGIGEDPDREGLKETPERVARMWEEFERMRNFDMKLFEEFGGYNEMVLVKDIKFYSLCEHHLLPFFGKVHIAYIPDKKISGLSKLVRTVRAFALRPQVQERLTEEIADFLEKELEPKGVGVVIEAEHLCMSMRGVMSPGHLTVTSALRGVFLKDIKTREEFLKLVKGV.

The Zn(2+) site is built by C74, H77, and C145.

The protein belongs to the GTP cyclohydrolase I family. Toroid-shaped homodecamer, composed of two pentamers of five dimers.

It catalyses the reaction GTP + H2O = 7,8-dihydroneopterin 3'-triphosphate + formate + H(+). Its pathway is cofactor biosynthesis; 7,8-dihydroneopterin triphosphate biosynthesis; 7,8-dihydroneopterin triphosphate from GTP: step 1/1. This chain is GTP cyclohydrolase 1 (folE), found in Aquifex aeolicus (strain VF5).